The chain runs to 500 residues: L-arabinose isomerase (500 aa).

Residues glutamate 306, glutamate 333, histidine 350, and histidine 450 each contribute to the Mn(2+) site.

This sequence belongs to the arabinose isomerase family. As to quaternary structure, homohexamer. Mn(2+) serves as cofactor.

It catalyses the reaction beta-L-arabinopyranose = L-ribulose. It participates in carbohydrate degradation; L-arabinose degradation via L-ribulose; D-xylulose 5-phosphate from L-arabinose (bacterial route): step 1/3. Catalyzes the conversion of L-arabinose to L-ribulose. The sequence is that of L-arabinose isomerase from Klebsiella pneumoniae subsp. pneumoniae (strain ATCC 700721 / MGH 78578).